The primary structure comprises 289 residues: uncharacterized protein (289 aa).

10 helical membrane-spanning segments follow: residues 7 to 27 (LLLA…KIGL), 33 to 53 (FNLA…WVFW), 65 to 85 (WLHL…FQFL), 92 to 112 (ATNA…WGLV), 123 to 143 (GVFL…LEFF), 148 to 168 (IFGD…TVLG), 182 to 202 (AYAF…SGFA), 212 to 232 (VAAL…VWYY), 241 to 261 (SVAV…FYAL), and 265 to 285 (PDFF…LTTA). 2 consecutive EamA domains span residues 14 to 136 (LIWA…LIVS) and 159 to 285 (FLWA…LTTA).

Belongs to the EamA transporter family.

It localises to the cell membrane. This is an uncharacterized protein from Archaeoglobus fulgidus (strain ATCC 49558 / DSM 4304 / JCM 9628 / NBRC 100126 / VC-16).